The following is a 344-amino-acid chain: Flavonoid 7-O-methyltransferase 1B (344 aa).

An S-adenosyl-L-methionine-binding site is contributed by Asp211. The active-site Proton acceptor is the His249.

The protein belongs to the class I-like SAM-binding methyltransferase superfamily. Cation-independent O-methyltransferase family. As to quaternary structure, homodimer.

It catalyses the reaction scutellarein + S-adenosyl-L-methionine = scutellarein 7-methyl ether + S-adenosyl-L-homocysteine. The enzyme catalyses 4',7,8-trihydroxyflavone + S-adenosyl-L-methionine = 4',8-dihydroxy-7-methoxyflavone + S-adenosyl-L-homocysteine. The catalysed reaction is isorhamnetin + S-adenosyl-L-methionine = rhamnacene + S-adenosyl-L-homocysteine + H(+). It carries out the reaction kaempferol + S-adenosyl-L-methionine = kaempferol 7-methyl ether + S-adenosyl-L-homocysteine + H(+). It catalyses the reaction (2S)-naringenin + S-adenosyl-L-methionine = (2S)-sakuranetin + S-adenosyl-L-homocysteine + H(+). The enzyme catalyses quercetin + S-adenosyl-L-methionine = rhamnetin + S-adenosyl-L-homocysteine + H(+). The catalysed reaction is apigenin + S-adenosyl-L-methionine = genkwanin + S-adenosyl-L-homocysteine + H(+). It carries out the reaction luteolin + S-adenosyl-L-methionine = luteolin 7-methyl ether + S-adenosyl-L-homocysteine + H(+). It functions in the pathway flavonoid metabolism. Its function is as follows. Flavonoid 7-O-methyltransferase involved in the biosynthesis of polymethoxylated flavonoids natural products such as pebrellin, aroma compounds which contribute to the flavor of peppermint, and exhibit pharmacological activities such as anti-allergic, anti-oxidant, antibacterial, anti-proliferative, and anti-inflammatory effects. Catalyzes S-adenosylmethionine-dependent regioselective 7-O-methylation of flavonoids; active on various hydroxylated flavonoid substrates, including luteolin (LUT), quercetin, kaempferol, isorhamnetin, apigenin (API), scutellarein (6-hydroxy-apigenin, 6-OH-API, SCU), 7,8,4'-trihydroxy-flavone and naringenin (NAR), and, with a lower efficiency, 7,8,3',4'-tetrahydroxy-flavone, taxifolin and hesperetin. The chain is Flavonoid 7-O-methyltransferase 1B from Mentha piperita (Peppermint).